The sequence spans 164 residues: MTEITFKGGPIHLKGQQINEGDFAPDFTVLDNDLNQVTLADYAGKKKLISVVPSIDTGVCDQQTRKFNSDASKEEGIVLTISADLPFAQKRWCASAGLDNVITLSDHRDLSFGENYGVVMEELRLLARAVFVLDADNKVVYKEIVSEGTDFPDFDAALAAYKNI.

Positions Ile-18–Asn-163 constitute a Thioredoxin domain. Cys-60 (cysteine sulfenic acid (-SOH) intermediate) is an active-site residue. The cysteines at positions 60 and 93 are disulfide-linked.

This sequence belongs to the peroxiredoxin family. Tpx subfamily. In terms of assembly, homodimer.

It catalyses the reaction a hydroperoxide + [thioredoxin]-dithiol = an alcohol + [thioredoxin]-disulfide + H2O. Its function is as follows. Thiol-specific peroxidase that catalyzes the reduction of hydrogen peroxide and organic hydroperoxides to water and alcohols, respectively. Plays a role in cell protection against oxidative stress by detoxifying peroxides. The sequence is that of Thiol peroxidase from Staphylococcus aureus (strain COL).